Consider the following 752-residue polypeptide: MSRTPLDTVEHATATPDVELPWAELGLKKDEYERVVEILGRRPTGAELAMYSVMWSEHCSYKSSKVHLRQFGEKAPQSDAMLVGIGENAGVVDVGQGYAVTFKVESHNHPSYVEPYQGAATGVGGIVRDIIAMGARPVAVVDPLRFGAADHPDTKRVLPGVVAGIGGYGNCLGLPNIGGEVVFDACYQGNPLVNAGAIGVMRHEDIHLAKASGAGNKVILYGARTGGDGIGGASILASETFDDAKPSKRPAVQVGDPFQEKLLIECTLEAFAEKLVVGIQDLGAAGLSCATSELASNGSGGMRVTLDDVPLRDSTLSPEEILMSESQERMCAVVEPEKVDRFLEICDKWDVIATVIGEVTDGDRLEIFWHGGKIVDVDPRTVAHDGPVYERPYARPDWQDALQADDANKLPRPGTSDELKAQVLKLVGSPNQASKQWITQQYDHFVQGNTVLAQPEDSGMIRVDEESGLGVAIATDGNGRYAKLDPYTGAQLALAEAYRNVATTGAKPLAVSDCLNFGSPEDPAVMWQFAEAVRGLADGCLQLGTPVTGGNVSLYNQTGEAAIHPTPVVAVLGVIDDVARRTPVAFQEDGQLLYLLGDTREEFGGSAWSQVIHDHLGGLPPKVDLERERLLGEILISASRDGMIDSAHDLSDGGLVQAVVESALLGGKGARLVVPDGLDAFTFLFSESAGRAVVAVPRSEEVRFNDMCGARGLPVTRIGVVDGDAVEVQGEFTLPLTDLREAHESTIPGLLA.

His58 is a catalytic residue. ATP is bound by residues Tyr61 and Lys103. Glu105 contacts Mg(2+). Substrate is bound by residues 106–109 (SHNH) and Arg128. His107 serves as the catalytic Proton acceptor. Asp129 is a Mg(2+) binding site. A substrate-binding site is contributed by Gln253. Residue Asp281 participates in Mg(2+) binding. 325–327 (ESQ) contacts substrate. 2 residues coordinate ATP: Asp513 and Gly550. Asn551 is a binding site for Mg(2+). Ser553 provides a ligand contact to substrate.

The protein belongs to the FGAMS family. Monomer. Part of the FGAM synthase complex composed of 1 PurL, 1 PurQ and 2 PurS subunits.

The protein localises to the cytoplasm. It carries out the reaction N(2)-formyl-N(1)-(5-phospho-beta-D-ribosyl)glycinamide + L-glutamine + ATP + H2O = 2-formamido-N(1)-(5-O-phospho-beta-D-ribosyl)acetamidine + L-glutamate + ADP + phosphate + H(+). It functions in the pathway purine metabolism; IMP biosynthesis via de novo pathway; 5-amino-1-(5-phospho-D-ribosyl)imidazole from N(2)-formyl-N(1)-(5-phospho-D-ribosyl)glycinamide: step 1/2. In terms of biological role, part of the phosphoribosylformylglycinamidine synthase complex involved in the purines biosynthetic pathway. Catalyzes the ATP-dependent conversion of formylglycinamide ribonucleotide (FGAR) and glutamine to yield formylglycinamidine ribonucleotide (FGAM) and glutamate. The FGAM synthase complex is composed of three subunits. PurQ produces an ammonia molecule by converting glutamine to glutamate. PurL transfers the ammonia molecule to FGAR to form FGAM in an ATP-dependent manner. PurS interacts with PurQ and PurL and is thought to assist in the transfer of the ammonia molecule from PurQ to PurL. The chain is Phosphoribosylformylglycinamidine synthase subunit PurL from Streptomyces coelicolor (strain ATCC BAA-471 / A3(2) / M145).